A 294-amino-acid polypeptide reads, in one-letter code: Large ribosomal subunit protein uL18 (294 aa).

The interval 247–275 is disordered; the sequence is RADPSPSAKKAAKPSKRHTAKRLTYDERK. Residues 256-267 show a composition bias toward basic residues; it reads KAAKPSKRHTAK.

This sequence belongs to the universal ribosomal protein uL18 family. As to quaternary structure, component of the large ribosomal subunit (LSU).

The protein resides in the cytoplasm. It is found in the nucleus. In terms of biological role, component of the ribosome, a large ribonucleoprotein complex responsible for the synthesis of proteins in the cell. The small ribosomal subunit (SSU) binds messenger RNAs (mRNAs) and translates the encoded message by selecting cognate aminoacyl-transfer RNA (tRNA) molecules. The large subunit (LSU) contains the ribosomal catalytic site termed the peptidyl transferase center (PTC), which catalyzes the formation of peptide bonds, thereby polymerizing the amino acids delivered by tRNAs into a polypeptide chain. The nascent polypeptides leave the ribosome through a tunnel in the LSU and interact with protein factors that function in enzymatic processing, targeting, and the membrane insertion of nascent chains at the exit of the ribosomal tunnel. This chain is Large ribosomal subunit protein uL18 (rpl-5), found in Caenorhabditis briggsae.